The following is a 491-amino-acid chain: Serine/threonine-protein kinase 3 (491 aa).

Met-1 is modified (N-acetylmethionine). Residue Ser-15 is modified to Phosphoserine; by PLK1. Residues 27–278 form the Protein kinase domain; sequence FDVLEKLGEG…ATQLLQHPFI (252 aa). Residues 33 to 41 and Lys-56 each bind ATP; that span reads LGEGSYGSV. A Phosphothreonine; by PKB/AKT1 modification is found at Thr-117. The active-site Proton acceptor is Asp-146. Mg(2+)-binding residues include Asn-151 and Asp-164. Phosphothreonine; by autocatalysis is present on residues Thr-174 and Thr-180. Residues 287–328 are a coiled coil; that stretch reads LRDLITEAMEIKAKRHEEQQRELEEEEENSDEDELDSHTMVK. Residues 301-327 form a disordered region; it reads RHEEQQRELEEEEENSDEDELDSHTMV. A compositionally biased stretch (acidic residues) spans 309 to 321; the sequence is LEEEEENSDEDEL. Residue Ser-316 is modified to Phosphoserine. Residues Thr-336 and Thr-378 each carry the phosphothreonine; by autocatalysis modification. Residues 370–392 form a disordered region; sequence EDEEEEDGTMKRNATSPQVQRPS. Positions 381 to 390 are enriched in polar residues; it reads RNATSPQVQR. Position 384 is a phosphothreonine; by PKB/AKT1 (Thr-384). Ser-385 and Ser-444 each carry phosphoserine. Positions 437-484 constitute an SARAH domain; that stretch reads FDFLKNLSLEELQMRLKALDPMMEREIEELRQRYTAKRQPILDAMDAK. A coiled-coil region spans residues 442–475; that stretch reads NLSLEELQMRLKALDPMMEREIEELRQRYTAKRQ.

The protein belongs to the protein kinase superfamily. STE Ser/Thr protein kinase family. STE20 subfamily. Homodimer; mediated via the coiled-coil region. Interacts with NORE1, which inhibits autoactivation. Interacts with and stabilizes SAV1. Interacts with RAF1, which prevents dimerization and phosphorylation. Interacts with RASSF1. Interacts (via SARAH domain) with isoform 1 of NEK2. Interacts with ESR1 only in the presence of SAV1. Interacts with PKB/AKT1. Forms a tripartite complex with MOBKL1B and STK38. Interacts with RASSF2 (via SARAH domain). Interacts with DLG5 (via PDZ domain 3). Interacts with LATS1; this interaction is inhibited in the presence of DLG5. Interacts with MARK3 in the presence of DLG5. Interacts with RASSF5; this interaction inhibits STK3 autoactivation through heterodimerization. Interacts (when phosphorylated) with SLMAP (via FHA domain); the interaction associates STK3 with the STRIPAK complex. The cofactor is Mg(2+). Autophosphorylated on two residues Thr-174 and Thr-180, leading to activation. Phosphorylation at Thr-117 and Thr-384 by PKB/AKT1, leads to inhibition of its: cleavage, kinase activity, autophosphorylation at Thr-180, binding to RASSF1 and nuclear translocation, and increase in its binding to RAF1. Phosphorylated at Ser-15 by PLK1, leading to activation. When autophosphorylated at Thr-180, recruits STRIPAK complex and promotes PP2A-mediated dephosphorylation and inactivation of STK3. Post-translationally, proteolytically cleaved by caspase-3 during apoptosis. Proteolytic cleavage results in kinase activation and nuclear translocation of the truncated form (MST1/N). In terms of processing, ubiquitinated by TRIM69; leading to its redistribution to the perinuclear cytoskeleton, where it is phosphorylated by PLK1 and subsequently activated. In terms of tissue distribution, expressed at high levels in adult kidney, skeletal and placenta tissues and at very low levels in adult heart, lung and brain tissues.

The protein resides in the cytoplasm. The protein localises to the nucleus. Its subcellular location is the cytoskeleton. It localises to the microtubule organizing center. It is found in the centrosome. The catalysed reaction is L-seryl-[protein] + ATP = O-phospho-L-seryl-[protein] + ADP + H(+). It carries out the reaction L-threonyl-[protein] + ATP = O-phospho-L-threonyl-[protein] + ADP + H(+). Inhibited by the C-terminal non-catalytic region. Activated by caspase-cleavage. Full activation also requires homodimerization and autophosphorylation of Thr-180, which are inhibited by the proto-oncogene product RAF1. Activated by RASSF1 which acts by preventing its dephosphorylation. When autophosphorylated at Thr-180, recruits STRIPAK complex and promotes PP2A-mediated dephosphorylation and inactivation of STK3. In terms of biological role, stress-activated, pro-apoptotic kinase which, following caspase-cleavage, enters the nucleus and induces chromatin condensation followed by internucleosomal DNA fragmentation. Key component of the Hippo signaling pathway which plays a pivotal role in organ size control and tumor suppression by restricting proliferation and promoting apoptosis. The core of this pathway is composed of a kinase cascade wherein STK3/MST2 and STK4/MST1, in complex with its regulatory protein SAV1, phosphorylates and activates LATS1/2 in complex with its regulatory protein MOB1, which in turn phosphorylates and inactivates YAP1 oncoprotein and WWTR1/TAZ. Phosphorylation of YAP1 by LATS2 inhibits its translocation into the nucleus to regulate cellular genes important for cell proliferation, cell death, and cell migration. STK3/MST2 and STK4/MST1 are required to repress proliferation of mature hepatocytes, to prevent activation of facultative adult liver stem cells (oval cells), and to inhibit tumor formation. Phosphorylates NKX2-1. Phosphorylates NEK2 and plays a role in centrosome disjunction by regulating the localization of NEK2 to centrosome, and its ability to phosphorylate CROCC and CEP250. In conjunction with SAV1, activates the transcriptional activity of ESR1 through the modulation of its phosphorylation. Positively regulates RAF1 activation via suppression of the inhibitory phosphorylation of RAF1 on 'Ser-259'. Phosphorylates MOBKL1A and RASSF2. Phosphorylates MOBKL1B on 'Thr-74'. Acts cooperatively with MOBKL1B to activate STK38. In Homo sapiens (Human), this protein is Serine/threonine-protein kinase 3.